The primary structure comprises 893 residues: Translation initiation factor IF-2 (893 aa).

The interval 49–303 (LNREAGSGPD…KGSSLQQGFQ (255 aa)) is disordered. Positions 68-82 (STLNIPGTGGKSKSV) are enriched in polar residues. Composition is skewed to basic and acidic residues over residues 93 to 159 (VKRD…KDKV) and 166 to 216 (DMTK…EENK). Over residues 254-269 (GRGRNAKAARPAKKGN) the composition is skewed to basic residues. Positions 270 to 283 (KHAESKADREEARA) are enriched in basic and acidic residues. Positions 392–561 (PRAPVVTIMG…LLQAEVLELK (170 aa)) constitute a tr-type G domain. Residues 401–408 (GHVDHGKT) are G1. Residue 401 to 408 (GHVDHGKT) coordinates GTP. The segment at 426–430 (GITQH) is G2. A G3 region spans residues 447–450 (DTPG). GTP contacts are provided by residues 447-451 (DTPGH) and 501-504 (NKID). Residues 501 to 504 (NKID) form a G4 region. Positions 537–539 (SAK) are G5.

Belongs to the TRAFAC class translation factor GTPase superfamily. Classic translation factor GTPase family. IF-2 subfamily.

It localises to the cytoplasm. One of the essential components for the initiation of protein synthesis. Protects formylmethionyl-tRNA from spontaneous hydrolysis and promotes its binding to the 30S ribosomal subunits. Also involved in the hydrolysis of GTP during the formation of the 70S ribosomal complex. The polypeptide is Translation initiation factor IF-2 (Salmonella arizonae (strain ATCC BAA-731 / CDC346-86 / RSK2980)).